A 368-amino-acid chain; its full sequence is Quinolinate synthase (368 aa).

2 residues coordinate iminosuccinate: His-46 and Ser-63. Position 110 (Cys-110) interacts with [4Fe-4S] cluster. Iminosuccinate-binding positions include 141-143 (YVN) and Ser-162. Cys-230 provides a ligand contact to [4Fe-4S] cluster. Iminosuccinate is bound by residues 256–258 (HPE) and Thr-273. Residue Cys-320 participates in [4Fe-4S] cluster binding.

It belongs to the quinolinate synthase family. Type 3 subfamily. The cofactor is [4Fe-4S] cluster.

It localises to the cytoplasm. It carries out the reaction iminosuccinate + dihydroxyacetone phosphate = quinolinate + phosphate + 2 H2O + H(+). The protein operates within cofactor biosynthesis; NAD(+) biosynthesis; quinolinate from iminoaspartate: step 1/1. Its function is as follows. Catalyzes the condensation of iminoaspartate with dihydroxyacetone phosphate to form quinolinate. The sequence is that of Quinolinate synthase from Bacillus cereus (strain B4264).